The sequence spans 204 residues: Peptide chain release factor homolog (204 aa).

An rRNA-recognition domain, N-terminus region spans residues 2–98; the sequence is ILLQLSSAQG…KNWFLGIGRF (97 aa). A linker 1 region spans residues 99–107; sequence TADEQEQSD. Residues 108-161 are GGQ domain; that stretch reads AIRYETLRSSGPGGQHVNKTDSAVRATHLASGISVKVQSERSQHANKRLARLLI. A GGQ motif motif is present at residues 120-122; it reads GGQ. The linker 2 stretch occupies residues 162–179; it reads AWKLEQQQQENSAALKSQ. An rRNA-recognition domain, C-terminus region spans residues 180 to 204; sequence RRMFHHQIERGNPRRTFTGMAFIEG.

Belongs to the prokaryotic/mitochondrial release factor family. Found in the A site of damaged 70S ribosomes, but not in undamaged ribosomes. Contacts (damaged) 16S rRNA, 23S rRNA and ribosomal protein uS12, but not mRNA.

Functionally, peptide chain release-like factor that acts on 70S ribosomes with specific damage to their decoding center (cleavage of 16S rRNA between adenine-1493 and guanosine-1494, E.coli 16S rRNA numbering). Probably acts as a peptidyl-tRNA hydrolase, allowing release of the nascent chain and dissociation of the 30S and 50S subunits. Can release mRNA as short as 19 nucleotides (nt, mRNA-19, which has a single amino acid in the P-site and only a single nt in the A-site) from the ribosome. This specific cleavage is inflicted by CdiA (ECL_04451) or by colicin E3-type (ColE3) proteins. In vivo the PrfH-RtcB2 pair restores growth in the presence of ribotoxins that specifically create this damage. The protein is Peptide chain release factor homolog of Escherichia coli (strain ATCC 25922 / DSM 1103 / LMG 8223 / NCIMB 12210 / NCTC 12241 / WDCM 00013 / Seattle 1946).